Here is a 269-residue protein sequence, read N- to C-terminus: tRNA pseudouridine synthase A (269 aa).

Aspartate 51 acts as the Nucleophile in catalysis. Tyrosine 109 contacts substrate.

Belongs to the tRNA pseudouridine synthase TruA family. As to quaternary structure, homodimer.

The catalysed reaction is uridine(38/39/40) in tRNA = pseudouridine(38/39/40) in tRNA. In terms of biological role, formation of pseudouridine at positions 38, 39 and 40 in the anticodon stem and loop of transfer RNAs. The polypeptide is tRNA pseudouridine synthase A (Haemophilus influenzae (strain 86-028NP)).